A 488-amino-acid chain; its full sequence is Ribulose bisphosphate carboxylase large chain 1 (488 aa).

Residues asparagine 127 and threonine 177 each contribute to the substrate site. The active-site Proton acceptor is the lysine 179. Lysine 181 is a binding site for substrate. Residues lysine 205, aspartate 207, and glutamate 208 each contribute to the Mg(2+) site. At lysine 205 the chain carries N6-carboxylysine. The active-site Proton acceptor is the histidine 297. The substrate site is built by arginine 298, histidine 330, and serine 382.

Belongs to the RuBisCO large chain family. Type I subfamily. In terms of assembly, heterohexadecamer of 8 large chains and 8 small chains. Requires Mg(2+) as cofactor.

It carries out the reaction 2 (2R)-3-phosphoglycerate + 2 H(+) = D-ribulose 1,5-bisphosphate + CO2 + H2O. It catalyses the reaction D-ribulose 1,5-bisphosphate + O2 = 2-phosphoglycolate + (2R)-3-phosphoglycerate + 2 H(+). Its function is as follows. RuBisCO catalyzes two reactions: the carboxylation of D-ribulose 1,5-bisphosphate, the primary event in carbon dioxide fixation, as well as the oxidative fragmentation of the pentose substrate. Both reactions occur simultaneously and in competition at the same active site. The protein is Ribulose bisphosphate carboxylase large chain 1 of Bradyrhizobium sp. (strain BTAi1 / ATCC BAA-1182).